Reading from the N-terminus, the 369-residue chain is RNA-binding protein rnp24 (369 aa).

Disordered regions lie at residues 1 to 77 (MEPI…KKKE), 200 to 219 (TDFS…TASI), and 304 to 369 (RMRN…IKFD). An RRM 1 domain is found at 105-206 (WGIWVGNLSF…KSNTDFSGRP (102 aa)). Over residues 209 to 219 (PANTLSKTASI) the composition is skewed to polar residues. The region spanning 228–310 (SILFVGNLDF…RSKRMRNKSP (83 aa)) is the RRM 2 domain. Positions 325 to 341 (QEDKPNFKRARKIDPRS) are enriched in basic and acidic residues. Residues 346 to 357 (AALAKAQRSSAA) show a composition bias toward low complexity.

Its subcellular location is the nucleus. This is RNA-binding protein rnp24 (rnp24) from Schizosaccharomyces pombe (strain 972 / ATCC 24843) (Fission yeast).